Here is a 359-residue protein sequence, read N- to C-terminus: 3-dehydroquinate synthase (359 aa).

Residues 71–76 (DGEAHK), 105–109 (GVIGD), 129–130 (TT), K142, K151, and 169–172 (TLHT) each bind NAD(+). Zn(2+) is bound by residues E184, H247, and H264.

The protein belongs to the sugar phosphate cyclases superfamily. Dehydroquinate synthase family. The cofactor is NAD(+). Co(2+) serves as cofactor. It depends on Zn(2+) as a cofactor.

The protein localises to the cytoplasm. It carries out the reaction 7-phospho-2-dehydro-3-deoxy-D-arabino-heptonate = 3-dehydroquinate + phosphate. It functions in the pathway metabolic intermediate biosynthesis; chorismate biosynthesis; chorismate from D-erythrose 4-phosphate and phosphoenolpyruvate: step 2/7. In terms of biological role, catalyzes the conversion of 3-deoxy-D-arabino-heptulosonate 7-phosphate (DAHP) to dehydroquinate (DHQ). In Neisseria meningitidis serogroup B (strain ATCC BAA-335 / MC58), this protein is 3-dehydroquinate synthase.